We begin with the raw amino-acid sequence, 864 residues long: Alanine--tRNA ligase (864 aa).

Residues His534, His538, Cys639, and His643 each coordinate Zn(2+).

It belongs to the class-II aminoacyl-tRNA synthetase family. It depends on Zn(2+) as a cofactor.

The protein resides in the cytoplasm. It carries out the reaction tRNA(Ala) + L-alanine + ATP = L-alanyl-tRNA(Ala) + AMP + diphosphate. Its function is as follows. Catalyzes the attachment of alanine to tRNA(Ala) in a two-step reaction: alanine is first activated by ATP to form Ala-AMP and then transferred to the acceptor end of tRNA(Ala). Also edits incorrectly charged Ser-tRNA(Ala) and Gly-tRNA(Ala) via its editing domain. This is Alanine--tRNA ligase from Onion yellows phytoplasma (strain OY-M).